A 258-amino-acid chain; its full sequence is PHD finger protein ALFIN-LIKE 1 (258 aa).

Positions 1-10 (MDASYRRDGR) are enriched in basic and acidic residues. Disordered regions lie at residues 1–24 (MDAS…SAPR) and 150–200 (SGSR…DGDH). Gly residues predominate over residues 11–21 (GGGGGGGGGGS). Residues 175–187 (HTSDVARVENNIK) are compositionally biased toward basic and acidic residues. The segment covering 188–199 (EEDEGYDEDDGD) has biased composition (acidic residues). Residues 202–254 (ETLCGTCGGIYSADEFWIGCDVCERWYHGKCVKITPAKAESIKQYKCPSCSSK) form a PHD-type zinc finger.

The protein belongs to the Alfin family. As to quaternary structure, interacts with H3K4me3 and to a lesser extent with H3K4me2.

It is found in the nucleus. Functionally, histone-binding component that specifically recognizes H3 tails trimethylated on 'Lys-4' (H3K4me3), which mark transcription start sites of virtually all active genes. The chain is PHD finger protein ALFIN-LIKE 1 from Oryza sativa subsp. indica (Rice).